Here is a 380-residue protein sequence, read N- to C-terminus: MYG1 exonuclease (380 aa).

The N-terminal 46 residues, 1–46 (MGRRFLRGILTLPLRSVLQAQHRMLGSEQDPPAKRPRNNLMAPPRI), are a transit peptide targeting the mitochondrion. N6-acetyllysine is present on residues Lys-266 and Lys-272.

It belongs to the MYG1 family. In terms of tissue distribution, ubiquitously expressed, with highest levels in testis.

It localises to the nucleus. The protein localises to the nucleoplasm. Its subcellular location is the mitochondrion matrix. It is found in the nucleolus. 3'-5' RNA exonuclease which cleaves in situ on specific transcripts in both nucleus and mitochondrion. Involved in regulating spatially segregated organellar RNA processing, acts as a coordinator of nucleo-mitochondrial crosstalk. In nucleolus, processes pre-ribosomal RNA involved in ribosome assembly and alters cytoplasmic translation. In mitochondrial matrix, processes 3'-termini of the mito-ribosomal and messenger RNAs and controls translation of mitochondrial proteins. This chain is MYG1 exonuclease, found in Mus musculus (Mouse).